Here is a 67-residue protein sequence, read N- to C-terminus: Conotoxin Im3.1 (67 aa).

The first 20 residues, 1–20, serve as a signal peptide directing secretion; it reads MMSTLVVLLTICLLMLPLTA. Positions 21-52 are excised as a propeptide; sequence RQLDADQLADQLAERMEDISADQNRWFDPVKR. Disulfide bonds link C53/C63, C54/C61, and C59/C64.

It belongs to the conotoxin M superfamily. As to expression, expressed by the venom duct.

The protein resides in the secreted. In terms of biological role, probable neurotoxin. This Conus imperialis (Imperial cone) protein is Conotoxin Im3.1.